The following is a 574-amino-acid chain: Egalitarian protein homolog (574 aa).

The interval 259–278 (LNEDGSENGSDEGEETNNNG) is disordered. The segment covering 262-273 (DGSENGSDEGEE) has biased composition (acidic residues). The 3'-5' exonuclease domain maps to 312–414 (NMEKKVVGLD…SLLQHEKFNK (103 aa)).

As to quaternary structure, component of a dynein-regulating complex composed of at least bicd-1, dlc-1 and egal-1.

The protein localises to the nucleus envelope. In terms of biological role, part of a complex with bicd-1 and dlc-1, which is recruited to the nuclear envelope by unc-83, where in turn, it recruits dynein to the nuclear surface and regulates nuclear migration in hypodermal precursor cells. The protein is Egalitarian protein homolog of Caenorhabditis elegans.